The following is a 142-amino-acid chain: Photosystem II extrinsic protein U (142 aa).

The N-terminal stretch at 1 to 28 is a signal peptide; the sequence is MKKIGLLLTIFSLCLGCLGLVPSDKAHA.

The protein belongs to the PsbU family. PSII is composed of 1 copy each of membrane proteins PsbA, PsbB, PsbC, PsbD, PsbE, PsbF, PsbH, PsbI, PsbJ, PsbK, PsbL, PsbM, PsbT, PsbX, PsbY, PsbZ, Psb30/Ycf12, peripheral proteins PsbO, CyanoQ (PsbQ), PsbU, PsbV and a large number of cofactors. It forms dimeric complexes.

It localises to the cellular thylakoid membrane. Functionally, one of the extrinsic, lumenal subunits of photosystem II (PSII). PSII is a light-driven water plastoquinone oxidoreductase, using light energy to abstract electrons from H(2)O, generating a proton gradient subsequently used for ATP formation. The extrinsic proteins stabilize the structure of photosystem II oxygen-evolving complex (OEC), the ion environment of oxygen evolution and protect the OEC against heat-induced inactivation. The chain is Photosystem II extrinsic protein U from Trichodesmium erythraeum (strain IMS101).